The sequence spans 305 residues: Homoserine O-acetyltransferase (305 aa).

C142 (acyl-thioester intermediate) is an active-site residue. Substrate contacts are provided by K163 and S192. H235 acts as the Proton acceptor in catalysis. E237 is an active-site residue. R249 is a substrate binding site.

This sequence belongs to the MetA family.

Its subcellular location is the cytoplasm. The enzyme catalyses L-homoserine + acetyl-CoA = O-acetyl-L-homoserine + CoA. It participates in amino-acid biosynthesis; L-methionine biosynthesis via de novo pathway; O-acetyl-L-homoserine from L-homoserine: step 1/1. In terms of biological role, transfers an acetyl group from acetyl-CoA to L-homoserine, forming acetyl-L-homoserine. The protein is Homoserine O-acetyltransferase of Bacteroides fragilis (strain YCH46).